The primary structure comprises 259 residues: Snake venom serine proteinase 2 (259 aa).

Positions methionine 1–alanine 18 are cleaved as a signal peptide. A propeptide spanning residues glutamine 19–leucine 24 is cleaved from the precursor. The Peptidase S1 domain maps to isoleucine 25–alanine 250. Disulfide bonds link cysteine 31-cysteine 162, cysteine 49-cysteine 65, cysteine 97-cysteine 257, cysteine 141-cysteine 211, cysteine 173-cysteine 190, and cysteine 201-cysteine 226. Residues histidine 64 and aspartate 109 each act as charge relay system in the active site. Serine 205 acts as the Charge relay system in catalysis.

It belongs to the peptidase S1 family. Snake venom subfamily. As to quaternary structure, monomer. As to expression, expressed by the venom gland.

It is found in the secreted. In terms of biological role, snake venom serine protease that may act in the hemostasis system of the prey. The chain is Snake venom serine proteinase 2 from Crotalus adamanteus (Eastern diamondback rattlesnake).